The chain runs to 420 residues: Ribulose bisphosphate carboxylase large chain (420 aa).

Residues N103 and T153 each coordinate substrate. The Proton acceptor role is filled by K155. K157 contacts substrate. The Mg(2+) site is built by K181, D183, and E184. The residue at position 181 (K181) is an N6-carboxylysine. The active-site Proton acceptor is the H274. Substrate is bound by residues R275, H307, and S359.

It belongs to the RuBisCO large chain family. Type I subfamily. In terms of assembly, heterohexadecamer of 8 large chains and 8 small chains; disulfide-linked. The disulfide link is formed within the large subunit homodimers. Requires Mg(2+) as cofactor. Post-translationally, the disulfide bond which can form in the large chain dimeric partners within the hexadecamer appears to be associated with oxidative stress and protein turnover.

It localises to the plastid. Its subcellular location is the chloroplast. It carries out the reaction 2 (2R)-3-phosphoglycerate + 2 H(+) = D-ribulose 1,5-bisphosphate + CO2 + H2O. The enzyme catalyses D-ribulose 1,5-bisphosphate + O2 = 2-phosphoglycolate + (2R)-3-phosphoglycerate + 2 H(+). Functionally, ruBisCO catalyzes two reactions: the carboxylation of D-ribulose 1,5-bisphosphate, the primary event in carbon dioxide fixation, as well as the oxidative fragmentation of the pentose substrate in the photorespiration process. Both reactions occur simultaneously and in competition at the same active site. The polypeptide is Ribulose bisphosphate carboxylase large chain (Anemia mexicana (Mexican fern)).